The chain runs to 430 residues: Enolase (430 aa).

Q163 provides a ligand contact to (2R)-2-phosphoglycerate. E205 functions as the Proton donor in the catalytic mechanism. 3 residues coordinate Mg(2+): D242, E288, and D315. (2R)-2-phosphoglycerate contacts are provided by K340, R369, S370, and K391. K340 serves as the catalytic Proton acceptor.

It belongs to the enolase family. Requires Mg(2+) as cofactor.

The protein resides in the cytoplasm. The protein localises to the secreted. It is found in the cell surface. The catalysed reaction is (2R)-2-phosphoglycerate = phosphoenolpyruvate + H2O. It functions in the pathway carbohydrate degradation; glycolysis; pyruvate from D-glyceraldehyde 3-phosphate: step 4/5. In terms of biological role, catalyzes the reversible conversion of 2-phosphoglycerate (2-PG) into phosphoenolpyruvate (PEP). It is essential for the degradation of carbohydrates via glycolysis. In Aster yellows witches'-broom phytoplasma (strain AYWB), this protein is Enolase.